The sequence spans 636 residues: Nuclear receptor subfamily 2 group C member 1 (636 aa).

A DNA-binding region (nuclear receptor) is located at residues 149–224 (VELCVVCGDK…LGMKQDSVQC (76 aa)). NR C4-type zinc fingers lie at residues 152–172 (CVVC…CEGC) and 188–207 (CRGS…CQYC). Residues 382–623 (ECVGSNSNLT…SIIPYILRME (242 aa)) form the NR LBD domain.

It belongs to the nuclear hormone receptor family. NR2 subfamily.

It is found in the nucleus. Orphan nuclear receptor. Binds the IR7 element in the promoter of its own gene in an autoregulatory negative feedback mechanism. Primarily repressor of a broad range of genes. Binds to hormone response elements (HREs) consisting of two 5'-AGGTCA-3' half site direct repeat consensus sequences. In Xenopus tropicalis (Western clawed frog), this protein is Nuclear receptor subfamily 2 group C member 1.